Reading from the N-terminus, the 355-residue chain is Protein RecA (355 aa).

65–72 (GPESSGKT) contacts ATP. The segment at 333 to 355 (IEEKDEKQAEAEKNENTNLFDEE) is disordered. Residues 336–347 (KDEKQAEAEKNE) show a composition bias toward basic and acidic residues.

The protein belongs to the RecA family.

It localises to the cytoplasm. Functionally, can catalyze the hydrolysis of ATP in the presence of single-stranded DNA, the ATP-dependent uptake of single-stranded DNA by duplex DNA, and the ATP-dependent hybridization of homologous single-stranded DNAs. It interacts with LexA causing its activation and leading to its autocatalytic cleavage. The polypeptide is Protein RecA (Staphylococcus carnosus (strain TM300)).